Here is a 349-residue protein sequence, read N- to C-terminus: DNA replication and repair protein RecF (349 aa).

ATP is bound at residue 29-36 (GLNGVGKT).

It belongs to the RecF family.

It is found in the cytoplasm. Its function is as follows. The RecF protein is involved in DNA metabolism; it is required for DNA replication and normal SOS inducibility. RecF binds preferentially to single-stranded, linear DNA. It also seems to bind ATP. The chain is DNA replication and repair protein RecF from Acholeplasma laidlawii (strain PG-8A).